Here is a 133-residue protein sequence, read N- to C-terminus: Protein U17 (133 aa).

A helical membrane pass occupies residues 82 to 102 (FVSVLWCVILVFVVKIKLFFL).

It localises to the membrane. The chain is Protein U17 (U17/U16) from Homo sapiens (Human).